We begin with the raw amino-acid sequence, 333 residues long: Delta-aminolevulinic acid dehydratase (333 aa).

Residues cysteine 127, cysteine 129, and cysteine 137 each coordinate Zn(2+). Catalysis depends on lysine 204, which acts as the Schiff-base intermediate with substrate. Residues arginine 214 and arginine 226 each contribute to the 5-aminolevulinate site. Catalysis depends on lysine 257, which acts as the Schiff-base intermediate with substrate. Positions 283 and 322 each coordinate 5-aminolevulinate.

This sequence belongs to the ALAD family. In terms of assembly, homooctamer. It depends on Zn(2+) as a cofactor.

The enzyme catalyses 2 5-aminolevulinate = porphobilinogen + 2 H2O + H(+). The protein operates within porphyrin-containing compound metabolism; protoporphyrin-IX biosynthesis; coproporphyrinogen-III from 5-aminolevulinate: step 1/4. Functionally, catalyzes an early step in the biosynthesis of tetrapyrroles. Binds two molecules of 5-aminolevulinate per subunit, each at a distinct site, and catalyzes their condensation to form porphobilinogen. The polypeptide is Delta-aminolevulinic acid dehydratase (alad) (Dictyostelium discoideum (Social amoeba)).